The chain runs to 233 residues: uncharacterized protein (233 aa).

It belongs to the asfivirus H233R family.

This is an uncharacterized protein from African swine fever virus (isolate Warthog/Namibia/Wart80/1980) (ASFV).